Consider the following 431-residue polypeptide: Serine--tRNA ligase (431 aa).

L-serine is bound at residue Thr-237–Glu-239. Residue Arg-268 to Glu-270 participates in ATP binding. Glu-291 is a binding site for L-serine. Glu-355–Ser-358 contacts ATP. Ser-390 serves as a coordination point for L-serine.

This sequence belongs to the class-II aminoacyl-tRNA synthetase family. Type-1 seryl-tRNA synthetase subfamily. In terms of assembly, homodimer. The tRNA molecule binds across the dimer.

It localises to the cytoplasm. It catalyses the reaction tRNA(Ser) + L-serine + ATP = L-seryl-tRNA(Ser) + AMP + diphosphate + H(+). It carries out the reaction tRNA(Sec) + L-serine + ATP = L-seryl-tRNA(Sec) + AMP + diphosphate + H(+). It functions in the pathway aminoacyl-tRNA biosynthesis; selenocysteinyl-tRNA(Sec) biosynthesis; L-seryl-tRNA(Sec) from L-serine and tRNA(Sec): step 1/1. Its function is as follows. Catalyzes the attachment of serine to tRNA(Ser). Is also able to aminoacylate tRNA(Sec) with serine, to form the misacylated tRNA L-seryl-tRNA(Sec), which will be further converted into selenocysteinyl-tRNA(Sec). This is Serine--tRNA ligase from Neisseria gonorrhoeae (strain ATCC 700825 / FA 1090).